The sequence spans 512 residues: DNA-binding protein (512 aa).

Residues 1 to 105 are disordered; sequence MAGRGGSQLE…QDSEDEREAE (105 aa). The span at 9–21 shows a compositional bias: basic and acidic residues; the sequence is LERRRERTPDRGR. Over residues 69–78 the composition is skewed to pro residues; the sequence is QEQPPPPQQP. Over residues 79–88 the composition is skewed to basic residues; sequence PKKKPRKTKH. Residues 96-105 show a composition bias toward acidic residues; the sequence is QDSEDEREAE. Position 174 is a phosphotyrosine; by host (Tyr-174). The Zn(2+) site is built by Cys-263 and His-265. The segment at 276–310 is flexible loop; that stretch reads IEMDVASENGQRALKENPDRAKVTQNRWGRSVVQL. Zn(2+)-binding residues include Cys-318, Cys-334, Cys-376, Cys-378, Cys-430, and Cys-447. Positions 495–512 are C-terminal arm, DBP binding; sequence VSLPAGHAETSRQNPFDF.

This sequence belongs to the adenoviridae E2A DNA-binding protein family. Homomultimerizes on viral ssDNA bound to pTP. Forms a initiation complex with viral polymerase, pTP and hosts NFIA and POU2F1/OCT1. Interacts with host SRCAP.

The protein resides in the host nucleus. In terms of biological role, plays a role in the elongation phase of viral strand displacement replication by unwinding the template in an ATP-independent fashion, employing its capacity to form multimers. Also enhances the rate of initiation. Released from template upon second strand synthesis. Assembles in complex with viral pTP, viral pol, host NFIA and host POU2F1/OCT1 on viral origin of replication. Covers the whole ssDNA genome during synthesis. The complementary strand synthesis induces its relese from DNA template. May inhibit cellular transcription mediated by the interaction between host SRCAP and CBP. The polypeptide is DNA-binding protein (Homo sapiens (Human)).